Here is a 164-residue protein sequence, read N- to C-terminus: Phosphopantetheine adenylyltransferase (164 aa).

Ser-9 is a binding site for substrate. Residues 9-10 (SF) and His-17 contribute to the ATP site. Residues Lys-41, Leu-78, and Arg-92 each contribute to the substrate site. ATP-binding positions include 93 to 95 (GLR), Glu-103, and 128 to 134 (GRVITST).

This sequence belongs to the bacterial CoaD family. Homohexamer. The cofactor is Mg(2+).

The protein localises to the cytoplasm. It catalyses the reaction (R)-4'-phosphopantetheine + ATP + H(+) = 3'-dephospho-CoA + diphosphate. Its pathway is cofactor biosynthesis; coenzyme A biosynthesis; CoA from (R)-pantothenate: step 4/5. Its function is as follows. Reversibly transfers an adenylyl group from ATP to 4'-phosphopantetheine, yielding dephospho-CoA (dPCoA) and pyrophosphate. The polypeptide is Phosphopantetheine adenylyltransferase (Bartonella bacilliformis (strain ATCC 35685 / KC583 / Herrer 020/F12,63)).